A 415-amino-acid polypeptide reads, in one-letter code: Phosphoglycerate kinase (415 aa).

(2R)-3-phosphoglycerate contacts are provided by valine 22, aspartate 23, phenylalanine 24, asparagine 25, glutamine 37, arginine 38, serine 61, histidine 62, glycine 64, leucine 120, arginine 121, histidine 168, and arginine 169. Glycine 212 contributes to the ADP binding site. A CDP-binding site is contributed by glycine 212. The AMP site is built by alanine 213 and lysine 214. ATP is bound at residue alanine 213. Mg(2+) is bound at residue alanine 213. Residue aspartate 217 participates in CDP binding. Residue aspartate 217 coordinates Mg(2+). AMP is bound at residue lysine 218. Lysine 218 provides a ligand contact to ATP. Position 236 (glycine 236) interacts with ADP. Glycine 236 is a CDP binding site. Residues glycine 237 and glycine 311 each contribute to the AMP site. Positions 237 and 311 each coordinate ATP. Glycine 336 and phenylalanine 341 together coordinate CDP. Position 341 (phenylalanine 341) interacts with ADP. AMP is bound at residue glutamate 342. The ATP site is built by glutamate 342, aspartate 373, and threonine 374. Aspartate 373 provides a ligand contact to Mg(2+).

It belongs to the phosphoglycerate kinase family. Monomer. Mg(2+) serves as cofactor.

The protein resides in the cytoplasm. The catalysed reaction is (2R)-3-phosphoglycerate + ATP = (2R)-3-phospho-glyceroyl phosphate + ADP. It participates in carbohydrate degradation; glycolysis; pyruvate from D-glyceraldehyde 3-phosphate: step 2/5. The polypeptide is Phosphoglycerate kinase (PGK) (Opisthorchis sinensis (Clonorchis sinensis)).